A 117-amino-acid chain; its full sequence is Putative pterin-4-alpha-carbinolamine dehydratase (117 aa).

Belongs to the pterin-4-alpha-carbinolamine dehydratase family.

It catalyses the reaction (4aS,6R)-4a-hydroxy-L-erythro-5,6,7,8-tetrahydrobiopterin = (6R)-L-erythro-6,7-dihydrobiopterin + H2O. This Aeromonas salmonicida (strain A449) protein is Putative pterin-4-alpha-carbinolamine dehydratase.